We begin with the raw amino-acid sequence, 886 residues long: 3',5'-cyclic-AMP phosphodiesterase 4A (886 aa).

A disordered region spans residues 1 to 128 (MEPPTVPSER…GRSPLDSQAS (128 aa)). S13 carries the phosphoserine modification. Residues 36-46 (QPRTPIRIQQR) show a composition bias toward low complexity. Basic and acidic residues predominate over residues 51–78 (SAERAERERQPHRPIERADAMDTSDRPG). Positions 93–104 (TGTGSGGAGGGS) are enriched in gly residues. A phosphoserine mark is found at G119 and L123. S152 carries the phosphoserine; by MAPKAPK2 modification. Residues S157, S165, and S209 each carry the phosphoserine modification. Positions 294–331 (KQNEVEIPSPTMKEREKQQAPRPRPSQPPPPPVPHLQP) are disordered. Positions 315–328 (RPRPSQPPPPPVPH) are enriched in pro residues. At S346 the chain carries Phosphoserine. The PDEase domain occupies 357 to 686 (VKTDQEELLA…DWYYSAIRQS (330 aa)). K358 is covalently cross-linked (Glycyl lysine isopeptide (Lys-Gly) (interchain with G-Cter in SUMO)). Residue H433 is the Proton donor of the active site. H433 provides a ligand contact to 3',5'-cyclic AMP. Residues H433 and H437 each contribute to the AMP site. The Zn(2+) site is built by H437, H473, D474, and D591. AMP-binding residues include D474, D591, Q642, and F645. D474 is a Mg(2+) binding site. D474 contributes to the Mn(2+) binding site. Residues Q642 and F645 each contribute to the 3',5'-cyclic AMP site. 2 disordered regions span residues 682–705 (AIRQ…PLPD) and 866–886 (FGED…GDPT). Phosphoserine occurs at positions 686 and 688. The span at 876–886 (PGGGGSGGDPT) shows a compositional bias: gly residues.

Belongs to the cyclic nucleotide phosphodiesterase family. PDE4 subfamily. As to quaternary structure, interacts with LYN (via SH3 domain). Interacts with ARRB2. The cofactor is Zn(2+). Mg(2+) serves as cofactor. Requires Mn(2+) as cofactor. Proteolytically cleaved by CASP3. In terms of processing, phosphorylated at Ser-119 by PKA. As to expression, expressed in lymphoid cell subsets including CD8-positive T cells and T-helper 2 cells. Expressed in dendritic cells. In terms of tissue distribution, highly expressed in liver, stomach, testis, thyroid and adrenal glands and at a lower extent in placenta, kidney, pancreas, ovary, uterus and skin. Expressed in myeloid cell subsets including dendritic cells, monocytes, macrophages, eosinophils and mast cells. Expressed in natural killer cells. Expressed in bronchial smooth muscle. Expressed at high levels in the heart and small intestine. It is also found in the brain, kidney, spleen, colon, salivary gland, ovary and peripheral blood lymphocytes. As to expression, expressed predominantly in skeletal muscle and brain and at lower levels in the testis. Found in specific neuronal subpopulations including cortical pyramidal neurons, horn neurons in the spinal cord and Purkinje cells in cerebellum (at protein level).

It is found in the cytoplasm. It localises to the perinuclear region. The protein resides in the cell projection. Its subcellular location is the ruffle membrane. The protein localises to the cytosol. It is found in the membrane. The catalysed reaction is 3',5'-cyclic AMP + H2O = AMP + H(+). It participates in purine metabolism; 3',5'-cyclic AMP degradation; AMP from 3',5'-cyclic AMP: step 1/1. With respect to regulation, inhibited by rolipram, cilomilast, Ro 20-1724, roflumilast and denbufylline. Inhibited by rolipram. Its activity is regulated as follows. Inhibited by rolipram and cilomilast. Hydrolyzes the second messenger 3',5'-cyclic AMP (cAMP), which is a key regulator of many important physiological processes. In terms of biological role, efficiently hydrolyzes cAMP. Functionally, efficiently hydrolyzes cAMP. The phosphodiesterase activity is not affected by calcium, calmodulin or cyclic GMP (cGMP) levels. Does not hydrolyze cGMP. This chain is 3',5'-cyclic-AMP phosphodiesterase 4A (PDE4A), found in Homo sapiens (Human).